We begin with the raw amino-acid sequence, 188 residues long: MEKEDLGLEITELRLGLPGAGGENNTDKDKNKNKKRVFSDIEGENSSSEEDGKKETKNQVVGWPPVCSYRKKNTVNEPKLYVKVSMDGAPFLRKIDLAMHKGYSDLAFALDKFFGCYGICEALKDAENAEHVPIYEDKDGDWMLVGDVPWEMFRESCKRLRIMKRSDAKGFDLQPKGSLKGFIEGVRK.

Positions L13–L17 match the EAR-like (transcriptional repression) motif. Residues G16–K57 form a disordered region. The PB1 domain occupies K79–D167.

It belongs to the Aux/IAA family. Homodimers and heterodimers.

It localises to the nucleus. Aux/IAA proteins are short-lived transcriptional factors that function as repressors of early auxin response genes at low auxin concentrations. Repression is thought to result from the interaction with auxin response factors (ARFs), proteins that bind to the auxin-responsive promoter element (AuxRE). Formation of heterodimers with ARF proteins may alter their ability to modulate early auxin response genes expression. The sequence is that of Auxin-induced protein 22C (AUX22C) from Vigna radiata var. radiata (Mung bean).